A 155-amino-acid polypeptide reads, in one-letter code: Interleukin-2 (155 aa).

The signal sequence occupies residues 1–20; that stretch reads MYKMQLLSCIALTLVLVANS. O-linked (GalNAc...) threonine glycosylation is present at Thr-23. Cys-79 and Cys-127 are oxidised to a cystine.

The protein belongs to the IL-2 family.

The protein localises to the secreted. Functionally, cytokine produced by activated CD4-positive helper T-cells and to a lesser extend activated CD8-positive T-cells and natural killer (NK) cells that plays pivotal roles in the immune response and tolerance. Binds to a receptor complex composed of either the high-affinity trimeric IL-2R (IL2RA/CD25, IL2RB/CD122 and IL2RG/CD132) or the low-affinity dimeric IL-2R (IL2RB and IL2RG). Interaction with the receptor leads to oligomerization and conformation changes in the IL-2R subunits resulting in downstream signaling starting with phosphorylation of JAK1 and JAK3. In turn, JAK1 and JAK3 phosphorylate the receptor to form a docking site leading to the phosphorylation of several substrates including STAT5. This process leads to activation of several pathways including STAT, phosphoinositide-3-kinase/PI3K and mitogen-activated protein kinase/MAPK pathways. Functions as a T-cell growth factor and can increase NK-cell cytolytic activity as well. Promotes strong proliferation of activated B-cells and subsequently immunoglobulin production. Plays a pivotal role in regulating the adaptive immune system by controlling the survival and proliferation of regulatory T-cells, which are required for the maintenance of immune tolerance. Moreover, participates in the differentiation and homeostasis of effector T-cell subsets, including Th1, Th2, Th17 as well as memory CD8-positive T-cells. The sequence is that of Interleukin-2 (IL2) from Halichoerus grypus (Gray seal).